A 602-amino-acid polypeptide reads, in one-letter code: Replication protein E1 (602 aa).

A Nuclear localization signal motif is present at residues 79–81; sequence KRK. A phosphoserine; by host mark is found at Ser-85 and Ser-92. Positions 91–100 match the Nuclear export signal motif; the sequence is LSPRLQCISI. Residues 142–305 form a DNA-binding region region; sequence QGAKGLGIVK…TMINHQTAEA (164 aa). The SF3 helicase domain maps to 404–554; sequence INFIQFLDSF…FPFDSDNNPQ (151 aa). Residue 430-437 participates in ATP binding; sequence GPPDTGKS.

This sequence belongs to the papillomaviridae E1 protein family. Can form hexamers. Interacts with E2 protein; this interaction increases E1 DNA binding specificity. Interacts with host DNA polymerase subunit POLA2. Interacts with host single stranded DNA-binding protein RPA1. Interacts with host TOP1; this interaction stimulates the enzymatic activity of TOP1. Phosphorylated.

It is found in the host nucleus. It carries out the reaction Couples ATP hydrolysis with the unwinding of duplex DNA by translocating in the 3'-5' direction.. It catalyses the reaction ATP + H2O = ADP + phosphate + H(+). In terms of biological role, ATP-dependent DNA 3'-5' helicase required for initiation of viral DNA replication. It forms a complex with the viral E2 protein. The E1-E2 complex binds to the replication origin which contains binding sites for both proteins. During the initial step, a dimer of E1 interacts with a dimer of protein E2 leading to a complex that binds the viral origin of replication with high specificity. Then, a second dimer of E1 displaces the E2 dimer in an ATP-dependent manner to form the E1 tetramer. Following this, two E1 monomers are added to each half of the site, which results in the formation of two E1 trimers on the viral ori. Subsequently, two hexamers will be created. The double hexamer acts as a bi-directional helicase machinery and unwinds the viral DNA and then recruits the host DNA polymerase to start replication. The protein is Replication protein E1 of Homo sapiens (Human).